The chain runs to 804 residues: Elongation factor G, mitochondrial (804 aa).

Residues 1–63 (MSMHRVARAV…RHFFQSPIIR (63 aa)) constitute a mitochondrion transit peptide. Positions 99–385 (RRVRNIGIAA…AVCDYLPNPA (287 aa)) constitute a tr-type G domain. Residues 108–115 (AHIDSGKT), 183–187 (DTPGH), and 237–240 (NKMD) each bind GTP.

This sequence belongs to the TRAFAC class translation factor GTPase superfamily. Classic translation factor GTPase family. EF-G/EF-2 subfamily.

It is found in the mitochondrion. It functions in the pathway protein biosynthesis; polypeptide chain elongation. Its function is as follows. Mitochondrial GTPase that catalyzes the GTP-dependent ribosomal translocation step during translation elongation. During this step, the ribosome changes from the pre-translocational (PRE) to the post-translocational (POST) state as the newly formed A-site-bound peptidyl-tRNA and P-site-bound deacylated tRNA move to the P and E sites, respectively. Catalyzes the coordinated movement of the two tRNA molecules, the mRNA and conformational changes in the ribosome. The protein is Elongation factor G, mitochondrial (mef1) of Sclerotinia sclerotiorum (strain ATCC 18683 / 1980 / Ss-1) (White mold).